We begin with the raw amino-acid sequence, 128 residues long: Iron-sulfur cluster insertion protein ErpA (128 aa).

3 residues coordinate iron-sulfur cluster: cysteine 56, cysteine 120, and cysteine 122.

The protein belongs to the HesB/IscA family. Homodimer. The cofactor is iron-sulfur cluster.

Functionally, required for insertion of 4Fe-4S clusters for at least IspG. In Xylella fastidiosa (strain M23), this protein is Iron-sulfur cluster insertion protein ErpA.